The sequence spans 468 residues: Argininosuccinate lyase (468 aa).

Residues Ser-33, Asn-121, and Thr-166 each contribute to the 2-(N(omega)-L-arginino)succinate site. His-167 acts as the Proton acceptor in catalysis. The active-site Proton donor is the Ser-288. Residues Asn-296, Tyr-328, Gln-333, and Lys-336 each coordinate 2-(N(omega)-L-arginino)succinate.

The protein belongs to the lyase 1 family. Argininosuccinate lyase subfamily. Homotetramer.

It catalyses the reaction 2-(N(omega)-L-arginino)succinate = fumarate + L-arginine. It participates in amino-acid biosynthesis; L-arginine biosynthesis; L-arginine from L-ornithine and carbamoyl phosphate: step 3/3. The protein is Argininosuccinate lyase (ARG4) of Candida albicans (Yeast).